We begin with the raw amino-acid sequence, 141 residues long: Putative inactive deoxyuridine 5'-triphosphate nucleotidohydrolase-like protein FLJ16323 (141 aa).

This sequence belongs to the dUTPase family.

This Homo sapiens (Human) protein is Putative inactive deoxyuridine 5'-triphosphate nucleotidohydrolase-like protein FLJ16323.